We begin with the raw amino-acid sequence, 545 residues long: Chaperonin GroEL (545 aa).

ATP-binding positions include 30 to 33 (TLGP), lysine 51, 87 to 91 (DGTTT), glycine 415, 479 to 481 (NAA), and aspartate 495. Residues 526-545 (KEDKPDLGGAGGMGGMGGMM) are disordered. Over residues 533-545 (GGAGGMGGMGGMM) the composition is skewed to gly residues.

It belongs to the chaperonin (HSP60) family. As to quaternary structure, forms a cylinder of 14 subunits composed of two heptameric rings stacked back-to-back. Interacts with the co-chaperonin GroES.

The protein localises to the cytoplasm. The catalysed reaction is ATP + H2O + a folded polypeptide = ADP + phosphate + an unfolded polypeptide.. Functionally, together with its co-chaperonin GroES, plays an essential role in assisting protein folding. The GroEL-GroES system forms a nano-cage that allows encapsulation of the non-native substrate proteins and provides a physical environment optimized to promote and accelerate protein folding. This is Chaperonin GroEL from Sodalis glossinidius.